Consider the following 239-residue polypeptide: Transcriptional regulatory protein BtsR (239 aa).

The 114-residue stretch at 3–116 (KVLIVDDEPL…RLEKTLARLR (114 aa)) folds into the Response regulatory domain. Asp54 carries the post-translational modification 4-aspartylphosphate. Positions 137-239 (IPCTGHSRIY…LKSLKEAIGL (103 aa)) constitute an HTH LytTR-type domain.

Phosphorylated by BtsS.

In terms of biological role, member of the two-component regulatory system BtsS/BtsR. BtsR regulates expression of btsT by binding to its promoter region. The sequence is that of Transcriptional regulatory protein BtsR from Escherichia coli O6:H1 (strain CFT073 / ATCC 700928 / UPEC).